The chain runs to 142 residues: MKTFVAKPHEVTRDWFVIDAKGKVLGRVASEVARRLRGKHKPEFTPHVDTGDYIVIINAADIVVTGKKSQDKKYFRHTTYPGGIRETNFEKMQERFPGRAIQKAVKGMLPKGPLGYAMIKKLKVYAGAEHPHTAQQPKPLDL.

It belongs to the universal ribosomal protein uL13 family. Part of the 50S ribosomal subunit.

Its function is as follows. This protein is one of the early assembly proteins of the 50S ribosomal subunit, although it is not seen to bind rRNA by itself. It is important during the early stages of 50S assembly. This is Large ribosomal subunit protein uL13 from Bordetella avium (strain 197N).